We begin with the raw amino-acid sequence, 144 residues long: Large ribosomal subunit protein uL15 (144 aa).

Residues 1-54 (MRLNTLSPAEGSKKAGKRLGRGIGSGLGKTGGRGHKGQKSRSGGGVRRGFEGGQ) are disordered. Over residues 21–31 (RGIGSGLGKTG) the composition is skewed to gly residues.

This sequence belongs to the universal ribosomal protein uL15 family. As to quaternary structure, part of the 50S ribosomal subunit.

Functionally, binds to the 23S rRNA. The chain is Large ribosomal subunit protein uL15 from Salmonella arizonae (strain ATCC BAA-731 / CDC346-86 / RSK2980).